We begin with the raw amino-acid sequence, 220 residues long: Iron-sulfur cluster repair protein YtfE (220 aa).

This sequence belongs to the RIC family. YtfE subfamily. As to quaternary structure, homodimer.

The protein localises to the cytoplasm. In terms of biological role, di-iron-containing protein involved in the repair of iron-sulfur clusters damaged by oxidative and nitrosative stress conditions. The sequence is that of Iron-sulfur cluster repair protein YtfE from Escherichia coli O157:H7.